A 149-amino-acid chain; its full sequence is Cytochrome c oxidase subunit 5A, mitochondrial (149 aa).

Belongs to the cytochrome c oxidase subunit 5A family. Component of the cytochrome c oxidase (complex IV, CIV), a multisubunit enzyme composed of a catalytic core of 3 subunits and several supernumerary subunits. The complex exists as a monomer or a dimer and forms supercomplexes (SCs) in the inner mitochondrial membrane with ubiquinol-cytochrome c oxidoreductase (cytochrome b-c1 complex, complex III, CIII).

It is found in the mitochondrion inner membrane. Its pathway is energy metabolism; oxidative phosphorylation. Component of the cytochrome c oxidase, the last enzyme in the mitochondrial electron transport chain which drives oxidative phosphorylation. The respiratory chain contains 3 multisubunit complexes succinate dehydrogenase (complex II, CII), ubiquinol-cytochrome c oxidoreductase (cytochrome b-c1 complex, complex III, CIII) and cytochrome c oxidase (complex IV, CIV), that cooperate to transfer electrons derived from NADH and succinate to molecular oxygen, creating an electrochemical gradient over the inner membrane that drives transmembrane transport and the ATP synthase. Cytochrome c oxidase is the component of the respiratory chain that catalyzes the reduction of oxygen to water. Electrons originating from reduced cytochrome c in the intermembrane space (IMS) are transferred via the dinuclear copper A center (CU(A)) of subunit 2 and heme A of subunit 1 to the active site in subunit 1, a binuclear center (BNC) formed by heme A3 and copper B (CU(B)). The BNC reduces molecular oxygen to 2 water molecules using 4 electrons from cytochrome c in the IMS and 4 protons from the mitochondrial matrix. The protein is Cytochrome c oxidase subunit 5A, mitochondrial of Drosophila melanogaster (Fruit fly).